We begin with the raw amino-acid sequence, 630 residues long: Probable potassium transport system protein Kup (630 aa).

12 consecutive transmembrane segments (helical) span residues 17 to 37, 51 to 71, 105 to 125, 144 to 164, 175 to 195, 218 to 238, 255 to 275, 283 to 303, 344 to 364, 374 to 394, 402 to 422, and 428 to 448; these read LAIAAIGVVFGDIGTSPLYSL, PSAILGVISLLFWAIILVVGI, ITGLMMALGIFGACMFYGDAV, PQLSHLVLPITIVILIALFWI, LFGPIMVLWFVTIAVLGIYHI, VLLAYVVLGSVVLVLTGAEAL, YVLVMPSLVLNYFGQGALLLL, PFFLLAPQWAALPLVVLSTVA, IYVPVVNWLLLFVILCIVIGF, YGIAVTATMVITTILAAVVMV, LLVAMIIGVFLVIDLGFFGAN, and QGGWLPLGIGALLFFLLMTWY.

The protein belongs to the HAK/KUP transporter (TC 2.A.72) family.

Its subcellular location is the cell inner membrane. It carries out the reaction K(+)(in) + H(+)(in) = K(+)(out) + H(+)(out). In terms of biological role, transport of potassium into the cell. Likely operates as a K(+):H(+) symporter. The polypeptide is Probable potassium transport system protein Kup (Burkholderia pseudomallei (strain K96243)).